A 696-amino-acid polypeptide reads, in one-letter code: DNA ligase (696 aa).

Residues aspartate 55–aspartate 59, serine 105–leucine 106, and glutamate 137 contribute to the NAD(+) site. Catalysis depends on lysine 139, which acts as the N6-AMP-lysine intermediate. Residues arginine 160, glutamate 194, lysine 310, and lysine 334 each contribute to the NAD(+) site. Zn(2+) contacts are provided by cysteine 428, cysteine 431, cysteine 446, and cysteine 451. Residues asparagine 615 to aspartate 696 enclose the BRCT domain.

Belongs to the NAD-dependent DNA ligase family. LigA subfamily. It depends on Mg(2+) as a cofactor. The cofactor is Mn(2+).

It carries out the reaction NAD(+) + (deoxyribonucleotide)n-3'-hydroxyl + 5'-phospho-(deoxyribonucleotide)m = (deoxyribonucleotide)n+m + AMP + beta-nicotinamide D-nucleotide.. Functionally, DNA ligase that catalyzes the formation of phosphodiester linkages between 5'-phosphoryl and 3'-hydroxyl groups in double-stranded DNA using NAD as a coenzyme and as the energy source for the reaction. It is essential for DNA replication and repair of damaged DNA. This Fusobacterium nucleatum subsp. nucleatum (strain ATCC 25586 / DSM 15643 / BCRC 10681 / CIP 101130 / JCM 8532 / KCTC 2640 / LMG 13131 / VPI 4355) protein is DNA ligase.